The following is a 186-amino-acid chain: Ribosome-recycling factor (186 aa).

This sequence belongs to the RRF family.

Its subcellular location is the cytoplasm. Functionally, responsible for the release of ribosomes from messenger RNA at the termination of protein biosynthesis. May increase the efficiency of translation by recycling ribosomes from one round of translation to another. The protein is Ribosome-recycling factor of Endomicrobium trichonymphae.